Reading from the N-terminus, the 665-residue chain is MREGTPRVRIEVNKGSNRPSQFVSESEEQRLQRVQSRDSDTATMNFVTDDRMMEEHDEYSAFKEAYEEEESREYVIENGVKRLVNQHYDSRGYSSAGRGQKGRREEERRRNMAVDYSSQDFRQSLAAIDQASRDGAISRGEDGVRVRQIGDTTIMTEHRDPYSFYWQLDQARREAESPPRRPPPTDYVIDEEEEVLETVYSPEADDVMFENQYRRPVRHPLPPPPPIMEEEPKDLPPGWEKHEDPQGYSYYWHVDSGTIQRQPPPPVNRETQADAPPPQIIQLPPQQPVIEEHAFKQTTTKRRIEQDEMSEREIEDVAMIENGDTYHKPVRFAVRSLGWTDISEDELTAEKSSRAVNRAIVDLTTRSDIDSIPKWGDGRELIMELDDNELALLDPDSMNVIHSERIQAIRVWGVGRDNGRDFAYVSRDRGTRRFMCHVFRCDTSAKTIANTLRDICKRLMLHRRPSSLHAIESGEKRIVRSEGLTAPIDEPRKVIRCHFLGVTQVPKATGIEILNEAVDRLVSQVRSERWILADVSIAPSTIAIVEVNGQQIAECRVRYLSFLGIGRDVKHCAFIMQTSSESFMCYVFHVEPNAAAMAKMVEAACKLRYQKVLDAHSSSRHHSGMSIHGQHPPSTYHGKGWTETFRDAFGSVTSRMVPSRSAQRL.

The segment covering 1–12 (MREGTPRVRIEV) has biased composition (basic and acidic residues). Disordered regions lie at residues 1–43 (MREG…DTAT) and 90–111 (SRGY…RRRN). Residues 14–24 (KGSNRPSQFVS) show a composition bias toward polar residues. 2 stretches are compositionally biased toward basic and acidic residues: residues 27-40 (EEQR…RDSD) and 102-111 (GRREEERRRN). In terms of domain architecture, WW spans 233-266 (KDLPPGWEKHEDPQGYSYYWHVDSGTIQRQPPPP). PID domains lie at 330–456 (VRFA…RDIC) and 499–615 (FLGV…VLDA).

Interacts (via PID 2 domain) with apl-1 (via cytoplasmic domain). In terms of processing, phosphorylated. Expressed in the pharynx (including pharyngeal muscle and nerve cells), ventral nerve cord and tail neurons.

The protein resides in the cytoplasm. It localises to the cytoskeleton. Its function is as follows. Modulates pharyngeal pumping activity, at least in part by regulating expression of the acetylcholinesterase genes ace-1 and ace-2. In Caenorhabditis elegans, this protein is Protein Fe65 homolog.